The sequence spans 335 residues: RVS161-like protein RVS162 (335 aa).

Positions 17–310 constitute a BAR domain; that stretch reads VMLKTGHIEQ…LDAQTRQDYI (294 aa). The stretch at 30–56 forms a coiled coil; sequence KEYEFQEKRYRTMEENSIKLQKNLRLY. Residues 105–127 are disordered; sequence HEEEGEEKEEEENDNTTTTTTTT. The segment covering 107–118 has biased composition (acidic residues); the sequence is EEGEEKEEEEND. Positions 222 to 259 form a coiled coil; that stretch reads TNIIELNHNQYEEKLKIYNQELTEVESKYVEINNQLLI.

Its subcellular location is the cytoplasm. The protein resides in the cytoskeleton. Its function is as follows. Component of a cytoskeletal structure that is required for membrane curvature. This chain is RVS161-like protein RVS162, found in Candida albicans (strain SC5314 / ATCC MYA-2876) (Yeast).